The chain runs to 137 residues: Nuclear transition protein 2 (137 aa).

Residues 1–21 (MDTKTQSLPNAHTQPHSNSGP) show a composition bias toward polar residues. The interval 1-137 (MDTKTQSLPN…KRRSSGRKYN (137 aa)) is disordered. Zn(2+)-binding residues include His-12, His-16, His-24, Cys-29, Cys-31, Cys-35, and Cys-38. Residues 22–74 (QSHACNQCSCSHHCQNCSQSCDRSQSCSRSRSSSQSPTGHRSLPGHQSQSLSP) are compositionally biased toward low complexity. The segment covering 78-91 (PRHRKRAMHSHRCP) has biased composition (basic residues). Residues 110 to 118 (GKANKRKGI) carry the Nuclear localization signal motif. The span at 126 to 137 (KTKRRSSGRKYN) shows a compositional bias: basic residues. Ser-132 is modified (phosphoserine).

The protein belongs to the nuclear transition protein 2 family. As to expression, testis. Expression is restricted to haploid germ cells.

It is found in the nucleus. Its subcellular location is the nucleolus. It localises to the chromosome. Its function is as follows. Plays a key role in the replacement of histones to protamine in the elongating spermatids of mammals. In condensing spermatids, loaded onto the nucleosomes, where it promotes the recruitment and processing of protamines, which are responsible for histone eviction. In Sus scrofa (Pig), this protein is Nuclear transition protein 2 (TNP2).